Consider the following 176-residue polypeptide: KxDL motif-containing protein 1 (176 aa).

N-acetylmethionine is present on Met1. A disordered region spans residues 95 to 176; the sequence is HPEAFSHIPE…HTDDEEMPGE (82 aa). Residues 119–131 are compositionally biased toward low complexity; it reads STTTTIATSEQST. Residues 132–145 show a composition bias toward polar residues; the sequence is GSCDTSPDTVSPSL.

It belongs to the KXD1 family. As to quaternary structure, component of the BLOC-one-related complex (BORC) which is composed of BLOC1S1, BLOC1S2, BORCS5, BORCS6, BORCS7, BORCS8, KXD1 and SNAPIN. Associates with the BLOC-1 complex. Interacts with BLOC1S1. Interacts with DTNBP1/BLOC1S7 (via coiled-coil domain).

The protein localises to the lysosome membrane. Its function is as follows. As part of the BORC complex may play a role in lysosomes movement and localization at the cell periphery. Associated with the cytosolic face of lysosomes, the BORC complex may recruit ARL8B and couple lysosomes to microtubule plus-end-directed kinesin motor. May also be involved in the biogenesis of lysosome-related organelles such as melanosomes. This Bos taurus (Bovine) protein is KxDL motif-containing protein 1 (KXD1).